The primary structure comprises 437 residues: MKFYIKTFGCQMNVNDSEKMAGILQTLGYTPTENWEEADVILVNTCSVREKPDQKVLSALGEFKKVKKHNPNAVIGVCGCLAQRAGYEIYQKAPFIDIVFGTTNIHHLPNLLEEAKSGNKAIEILEEIDENENLLDQFPTVRENKYTAFVTVIRGCDKKCTYCIVPTTRGRERSRRIGDILREVQYLVEDGVKEIHLIGQNVTAYGKDFGDVKFWELLKAVAEVDGVERIRFTTGHPRDLDEDTIKVMADLPQICEALHLPIQAGSDRILQAMDRGYTQKEYLQKIELLKKYIPNIALSTDIIVGFPGETYEDYLETVKVIKEVEYDQVFAFKYSPRPGTPAADLPMTESPEELSKRLNDLINLQKDITFKKNLEYQDKIVEILVEEINQENKLVGRTRTNKLVYAEGSPEYLGKLVNVKIEKVNRFSLEGSIIGGD.

One can recognise an MTTase N-terminal domain in the interval 1 to 117 (MKFYIKTFGC…LPNLLEEAKS (117 aa)). [4Fe-4S] cluster is bound by residues Cys-10, Cys-46, Cys-80, Cys-156, Cys-160, and Cys-163. Residues 142-371 (RENKYTAFVT…INLQKDITFK (230 aa)) form the Radical SAM core domain. Residues 374–435 (LEYQDKIVEI…RFSLEGSIIG (62 aa)) form the TRAM domain.

This sequence belongs to the methylthiotransferase family. MiaB subfamily. In terms of assembly, monomer. [4Fe-4S] cluster is required as a cofactor.

The protein localises to the cytoplasm. It catalyses the reaction N(6)-dimethylallyladenosine(37) in tRNA + (sulfur carrier)-SH + AH2 + 2 S-adenosyl-L-methionine = 2-methylsulfanyl-N(6)-dimethylallyladenosine(37) in tRNA + (sulfur carrier)-H + 5'-deoxyadenosine + L-methionine + A + S-adenosyl-L-homocysteine + 2 H(+). In terms of biological role, catalyzes the methylthiolation of N6-(dimethylallyl)adenosine (i(6)A), leading to the formation of 2-methylthio-N6-(dimethylallyl)adenosine (ms(2)i(6)A) at position 37 in tRNAs that read codons beginning with uridine. This chain is tRNA-2-methylthio-N(6)-dimethylallyladenosine synthase, found in Sulfurihydrogenibium sp. (strain YO3AOP1).